The chain runs to 1371 residues: DNA-directed RNA polymerase subunit beta' (1371 aa).

The Zn(2+) site is built by Cys71, Cys73, Cys86, and Cys89. Residues Asp461, Asp463, and Asp465 each coordinate Mg(2+). Residues Cys803, Cys877, Cys884, and Cys887 each contribute to the Zn(2+) site.

This sequence belongs to the RNA polymerase beta' chain family. In terms of assembly, the RNAP catalytic core consists of 2 alpha, 1 beta, 1 beta' and 1 omega subunit. When a sigma factor is associated with the core the holoenzyme is formed, which can initiate transcription. Mg(2+) is required as a cofactor. Zn(2+) serves as cofactor.

It catalyses the reaction RNA(n) + a ribonucleoside 5'-triphosphate = RNA(n+1) + diphosphate. Functionally, DNA-dependent RNA polymerase catalyzes the transcription of DNA into RNA using the four ribonucleoside triphosphates as substrates. This chain is DNA-directed RNA polymerase subunit beta', found in Thermodesulfovibrio yellowstonii (strain ATCC 51303 / DSM 11347 / YP87).